A 908-amino-acid chain; its full sequence is Protein translocase subunit SecA (908 aa).

Residues Q87, 105–109 (GEGKT), and D512 contribute to the ATP site. Positions 866–908 (GSDEDDAIAAHTPMIRDGDKVGRNDPCPCGSGRKYKQCHGKLS) are disordered. Residues 879–888 (MIRDGDKVGR) show a composition bias toward basic and acidic residues. The Zn(2+) site is built by C892, C894, C903, and H904. Residues 898–908 (RKYKQCHGKLS) show a composition bias toward basic residues.

This sequence belongs to the SecA family. As to quaternary structure, monomer and homodimer. Part of the essential Sec protein translocation apparatus which comprises SecA, SecYEG and auxiliary proteins SecDF-YajC and YidC. The cofactor is Zn(2+).

The protein localises to the cell inner membrane. Its subcellular location is the cytoplasm. It carries out the reaction ATP + H2O + cellular proteinSide 1 = ADP + phosphate + cellular proteinSide 2.. Its function is as follows. Part of the Sec protein translocase complex. Interacts with the SecYEG preprotein conducting channel. Has a central role in coupling the hydrolysis of ATP to the transfer of proteins into and across the cell membrane, serving both as a receptor for the preprotein-SecB complex and as an ATP-driven molecular motor driving the stepwise translocation of polypeptide chains across the membrane. The chain is Protein translocase subunit SecA from Shewanella oneidensis (strain ATCC 700550 / JCM 31522 / CIP 106686 / LMG 19005 / NCIMB 14063 / MR-1).